Reading from the N-terminus, the 693-residue chain is Elongation factor G (693 aa).

One can recognise a tr-type G domain in the interval Lys-8–Leu-282. GTP contacts are provided by residues Ala-17–Thr-24, Asp-81–His-85, and Asn-135–Asp-138.

This sequence belongs to the TRAFAC class translation factor GTPase superfamily. Classic translation factor GTPase family. EF-G/EF-2 subfamily.

Its subcellular location is the cytoplasm. Its function is as follows. Catalyzes the GTP-dependent ribosomal translocation step during translation elongation. During this step, the ribosome changes from the pre-translocational (PRE) to the post-translocational (POST) state as the newly formed A-site-bound peptidyl-tRNA and P-site-bound deacylated tRNA move to the P and E sites, respectively. Catalyzes the coordinated movement of the two tRNA molecules, the mRNA and conformational changes in the ribosome. In Staphylococcus intermedius, this protein is Elongation factor G.